Here is a 614-residue protein sequence, read N- to C-terminus: MAAVVQQNDLVFEFASNVMEDEQQLGDPAIFPAVIVEHVPGADILNSYAGLACVEEPNDMITESSLDVAEEEIIDEDEDDITLTVEASCHNGDETIETIEAAEALLNMDSPGPMLDEKRMNNSIFSSSEDDMVVAPVTHVSVTLDGIPEVMETQHVQETYAHSPGPSSPEQPKRKKGRKTKPPRPDSPTTTPNISVKKKNKDGKGNTIYLWEFLLALLQDKATCPKYIKWTQREKGIFKLVDSKAVSRLWGKHKNKPDMNYETMGRALRYYYQRGILAKVEGQRLVYQFKDMPKDLIYIDDEDPSCSIESSDPSLSSTATSSRNPASRSRASSSPGIKGGATTVLKPGNSKAAKPKDPMEPVQPSEALRTVQSTQAPYPTQLFRTIHVVQPVQAVPEAEAASSMPEETLNPSVPSIRTIQTPAQVPVVVSPGNQHLHTVTLQTVPITTVIASADPSSAAGSQKFILQAIPSSQPMTVLKENVVLQSQKPGSPPSIVLSPAHVQQVLTSSVPTVCNGTVSAASAPSFSATTPMVTFSHHSSQLVAHPPGTVITSVIKAQEAKTHIQEEVKKEVEDNEKQGTEDAEQQLQPYVMVVSNGFPSQAAIKNELLEPSSF.

Phosphoserine occurs at positions 110, 163, 167, and 168. Positions 159–199 (TYAHSPGPSSPEQPKRKKGRKTKPPRPDSPTTTPNISVKKK) are disordered. Basic residues predominate over residues 173-182 (KRKKGRKTKP). Phosphoserine is present on Ser-187. Thr-190 carries the phosphothreonine modification. A DNA-binding region (ETS) is located at residues 208–290 (IYLWEFLLAL…EGQRLVYQFK (83 aa)). The interval 303–371 (DPSCSIESSD…VQPSEALRTV (69 aa)) is disordered. Over residues 310–335 (SSDPSLSSTATSSRNPASRSRASSSP) the composition is skewed to low complexity. Residue Ser-430 is modified to Phosphoserine.

It belongs to the ETS family. In terms of assembly, binds to the underphosphorylated form of RB. May interact with other transcription factors in order to regulate specific genes. Interacts with RUNX1.

It localises to the nucleus. Its function is as follows. Transcription factor that activates the LYN and BLK promoters. This chain is ETS-related transcription factor Elf-1 (ELF1), found in Bos taurus (Bovine).